Reading from the N-terminus, the 336-residue chain is tRNA N6-adenosine threonylcarbamoyltransferase (336 aa).

Fe cation is bound by residues histidine 112 and histidine 116. Substrate-binding positions include leucine 136 to glycine 140, aspartate 169, glycine 182, and asparagine 276. Aspartate 304 provides a ligand contact to Fe cation.

This sequence belongs to the KAE1 / TsaD family. Fe(2+) serves as cofactor.

The protein localises to the cytoplasm. It catalyses the reaction L-threonylcarbamoyladenylate + adenosine(37) in tRNA = N(6)-L-threonylcarbamoyladenosine(37) in tRNA + AMP + H(+). In terms of biological role, required for the formation of a threonylcarbamoyl group on adenosine at position 37 (t(6)A37) in tRNAs that read codons beginning with adenine. Is involved in the transfer of the threonylcarbamoyl moiety of threonylcarbamoyl-AMP (TC-AMP) to the N6 group of A37, together with TsaE and TsaB. TsaD likely plays a direct catalytic role in this reaction. This chain is tRNA N6-adenosine threonylcarbamoyltransferase, found in Francisella tularensis subsp. novicida (strain U112).